Reading from the N-terminus, the 299-residue chain is MHGFLNINKPQAMTSFDVIKKLKKVLPRKYKLGHLGTLDPMAEGVLPVAVGCGTRIIPFVEDETKEYIATMTLGASSDTQDAWGVITYHTPRKIEPAQVEKVLALFRGKSRQVPPMYSAVHHEGKRLYELARQGLEVERKAREIEIFELELLNADWEQELPQLSLRVSCSRGTYIRTLCHDIGQELGCGAYLSSLRRSRSGCFKIEEAVSLDYIIEKRENLSRALLPLDYPINNLPLISLKSAELPAIINGRQISRTGKLASPRVRLYTPEGQLLAIAEANNYNEDTVLQPCRVFKINE.

Asp-39 acts as the Nucleophile in catalysis.

The protein belongs to the pseudouridine synthase TruB family. Type 1 subfamily.

The catalysed reaction is uridine(55) in tRNA = pseudouridine(55) in tRNA. Responsible for synthesis of pseudouridine from uracil-55 in the psi GC loop of transfer RNAs. The polypeptide is tRNA pseudouridine synthase B (Syntrophomonas wolfei subsp. wolfei (strain DSM 2245B / Goettingen)).